The primary structure comprises 189 residues: Keratin-associated protein 5-2 (189 aa).

8 tandem repeats follow at residues 21–24 (CCKP), 27–30 (CCKP), 33–36 (CCVP), 134–137 (CCKP), 144–147 (CCKP), 159–162 (CCKP), 169–172 (CCKP), and 179–182 (CCAP). The segment at 27–182 (CCKPVCCCVP…CCCQSSCCAP (156 aa)) is 8 X 4 AA repeats of C-C-X-P.

This sequence belongs to the KRTAP type 5 family. In terms of assembly, interacts with hair keratins.

Functionally, in the hair cortex, hair keratin intermediate filaments are embedded in an interfilamentous matrix, consisting of hair keratin-associated protein (KRTAP), which are essential for the formation of a rigid and resistant hair shaft through their extensive disulfide bond cross-linking with abundant cysteine residues of hair keratins. The matrix proteins include the high-sulfur and high-glycine-tyrosine keratins. In Mus musculus (Mouse), this protein is Keratin-associated protein 5-2.